Reading from the N-terminus, the 185-residue chain is Stathmin-4 (185 aa).

The region spanning Ser48–Arg185 is the SLD domain. Residues Ser90–Arg185 adopt a coiled-coil conformation. A disordered region spans residues Glu165 to Arg185. Over residues Arg166–Arg185 the composition is skewed to basic and acidic residues.

The protein belongs to the stathmin family. As to expression, nervous tissue.

In Xenopus laevis (African clawed frog), this protein is Stathmin-4 (stmn4).